Consider the following 218-residue polypeptide: Carnitine transport permease protein OpuCB (218 aa).

Positions 19 to 198 (TWQHLFISLS…ILALVVEFAL (180 aa)) constitute an ABC transmembrane type-1 domain. Helical transmembrane passes span 23–43 (LFISLSAVILGIAVAVPTGIL), 48–68 (PKVANFVIGVVSVLQTVPSLA), 79–101 (VGTLPAIIALFIYALLPILRNTF), 149–169 (VIAWATLASYIGAGGLGDFIF), and 179–199 (LILGGAIPVTILALVVEFALG).

Belongs to the binding-protein-dependent transport system permease family. In terms of assembly, the complex is composed of two ATP-binding proteins (OpuCA), two transmembrane proteins (OpuCB and OpuCD) and a solute-binding protein (OpuCC).

It is found in the cell membrane. In terms of biological role, part of the ABC transporter complex OpuCABCD involved in carnitine uptake. Probably responsible for the translocation of the substrate across the membrane. Involved, with BetL and GbuABC, in osmoprotection and cryoprotection of Listeria. The polypeptide is Carnitine transport permease protein OpuCB (opuCB) (Listeria monocytogenes).